The sequence spans 226 residues: DNA mismatch repair protein MutH (226 aa).

The protein belongs to the MutH family.

The protein localises to the cytoplasm. Functionally, sequence-specific endonuclease that cleaves unmethylated GATC sequences. It is involved in DNA mismatch repair. The protein is DNA mismatch repair protein MutH of Actinobacillus pleuropneumoniae serotype 5b (strain L20).